Here is a 200-residue protein sequence, read N- to C-terminus: Ciliary neurotrophic factor (200 aa).

This sequence belongs to the CNTF family. As to expression, nervous system.

It localises to the cytoplasm. Its function is as follows. CNTF is a survival factor for various neuronal cell types. Seems to prevent the degeneration of motor axons after axotomy. In Sus scrofa (Pig), this protein is Ciliary neurotrophic factor (CNTF).